We begin with the raw amino-acid sequence, 214 residues long: Phosphoribosylglycinamide formyltransferase (214 aa).

A N(1)-(5-phospho-beta-D-ribosyl)glycinamide-binding site is contributed by 12–14 (GSN). Residues 105–108 (LLIL) and N123 each bind (6R)-10-formyltetrahydrofolate. H125 serves as the catalytic Proton donor. Residue D167 coordinates (6R)-10-formyltetrahydrofolate. N(1)-(5-phospho-beta-D-ribosyl)glycinamide is bound at residue E197.

Belongs to the GART family.

It carries out the reaction N(1)-(5-phospho-beta-D-ribosyl)glycinamide + (6R)-10-formyltetrahydrofolate = N(2)-formyl-N(1)-(5-phospho-beta-D-ribosyl)glycinamide + (6S)-5,6,7,8-tetrahydrofolate + H(+). Its pathway is purine metabolism; IMP biosynthesis via de novo pathway; N(2)-formyl-N(1)-(5-phospho-D-ribosyl)glycinamide from N(1)-(5-phospho-D-ribosyl)glycinamide (10-formyl THF route): step 1/1. The sequence is that of Phosphoribosylglycinamide formyltransferase from Saccharomyces cerevisiae (strain ATCC 204508 / S288c) (Baker's yeast).